A 217-amino-acid chain; its full sequence is Probable transaldolase (217 aa).

Catalysis depends on lysine 83, which acts as the Schiff-base intermediate with substrate.

It belongs to the transaldolase family. Type 3B subfamily.

The protein resides in the cytoplasm. The catalysed reaction is D-sedoheptulose 7-phosphate + D-glyceraldehyde 3-phosphate = D-erythrose 4-phosphate + beta-D-fructose 6-phosphate. It functions in the pathway carbohydrate degradation; pentose phosphate pathway; D-glyceraldehyde 3-phosphate and beta-D-fructose 6-phosphate from D-ribose 5-phosphate and D-xylulose 5-phosphate (non-oxidative stage): step 2/3. Its function is as follows. Transaldolase is important for the balance of metabolites in the pentose-phosphate pathway. The chain is Probable transaldolase from Erythrobacter litoralis (strain HTCC2594).